The sequence spans 478 residues: Proline--tRNA ligase (478 aa).

It belongs to the class-II aminoacyl-tRNA synthetase family. ProS type 3 subfamily. As to quaternary structure, homodimer.

It is found in the cytoplasm. The catalysed reaction is tRNA(Pro) + L-proline + ATP = L-prolyl-tRNA(Pro) + AMP + diphosphate. In terms of biological role, catalyzes the attachment of proline to tRNA(Pro) in a two-step reaction: proline is first activated by ATP to form Pro-AMP and then transferred to the acceptor end of tRNA(Pro). The protein is Proline--tRNA ligase of Clostridium botulinum (strain Kyoto / Type A2).